The sequence spans 652 residues: DNA ligase (652 aa).

NAD(+) is bound by residues 29-33, 78-79, and E107; these read DQEYD and SL. K109 serves as the catalytic N6-AMP-lysine intermediate. 4 residues coordinate NAD(+): R130, E164, K278, and K302. Zn(2+)-binding residues include C395, C398, C413, and C418. One can recognise a BRCT domain in the interval 577-652; that stretch reads DTSAQLFGLT…VKDENWLLQL (76 aa).

This sequence belongs to the NAD-dependent DNA ligase family. LigA subfamily. Mg(2+) serves as cofactor. It depends on Mn(2+) as a cofactor.

The enzyme catalyses NAD(+) + (deoxyribonucleotide)n-3'-hydroxyl + 5'-phospho-(deoxyribonucleotide)m = (deoxyribonucleotide)n+m + AMP + beta-nicotinamide D-nucleotide.. Its function is as follows. DNA ligase that catalyzes the formation of phosphodiester linkages between 5'-phosphoryl and 3'-hydroxyl groups in double-stranded DNA using NAD as a coenzyme and as the energy source for the reaction. It is essential for DNA replication and repair of damaged DNA. The polypeptide is DNA ligase (Streptococcus uberis (strain ATCC BAA-854 / 0140J)).